Consider the following 534-residue polypeptide: MFASYKSIQETCAFEKLSELAQSPYDLTQPGALQADNRLQRYQVAGQAFKLFYATEQVDDRVLAGLQAVADECQLVSQYRAMRTGAVMNKIDGFVSENRRVLHTATRDLFSGEPAEASMNSRAKRELEKLSHFLDALDAGEIVNEAGEAFTTIVQVGIGGSDLGPRAVYEALKSYTIVGRRAAFISNVDPDDVSMALADLDLGKTIFNIVSKSGSTLETVTNEAFVRRALLENGYDSARHCISITGEGSPMDDPDSYLASFYLYDCIGGRYSTTSMVGCVLLGFTLGFEQVMAFLRGAANMDNSADEVDILKNIPLLMALIGIWNRNFLDLSSLAIIPYSQALYRFPAHLQQCDMESNGKSVDRQGRAVQGKTGPIIWGETGSNSQHAFFQHIYQGTSPVPIEFIGFSESQRGKDIEVQGCTSQQKLLANLFAQMVALACGKKDQNLNKFFAGNRPSCLLFAKKLTPYVMGSLLACYEAKIVFQGFAWNINSFDQEGVQLGKELAKRFLREIGGEEEGFHGIESAFLNEVQRGV.

Residue glutamate 356 is the Proton donor of the active site. Catalysis depends on residues histidine 387 and lysine 502.

Belongs to the GPI family.

The protein resides in the cytoplasm. The catalysed reaction is alpha-D-glucose 6-phosphate = beta-D-fructose 6-phosphate. It functions in the pathway carbohydrate biosynthesis; gluconeogenesis. The protein operates within carbohydrate degradation; glycolysis; D-glyceraldehyde 3-phosphate and glycerone phosphate from D-glucose: step 2/4. Functionally, catalyzes the reversible isomerization of glucose-6-phosphate to fructose-6-phosphate. This Desulfotalea psychrophila (strain LSv54 / DSM 12343) protein is Glucose-6-phosphate isomerase.